The following is a 324-amino-acid chain: Deoxyhypusine hydroxylase (324 aa).

2 HEAT-like PBS-type repeats span residues 60 to 86 (LKHELAYCLGQTGSDAAIPHLTQVLED) and 94 to 119 (RHEAAEALGALGKAESLGVLQKYLHR). Fe cation-binding residues include H62, E63, H95, and E96. The segment covering 143–152 (EERKQEKLRQ) has biased composition (basic and acidic residues). The interval 143–171 (EERKQEKLRQSDFASVDPAPPMPEDDEKQ) is disordered. 3 HEAT-like PBS-type repeats span residues 189-219 (KRYRAMFALRDLASPPDLPTAVPAILALAKG), 227-253 (FRHEIAFVFGQLSHPASIPALTEALSN), and 260-287 (VRHEAAEALGSLGDEEGVEETLLKFLHD). Residues H229, E230, H262, and E263 each coordinate Fe cation.

Belongs to the deoxyhypusine hydroxylase family. Requires Fe(2+) as cofactor.

The protein localises to the cytoplasm. It localises to the nucleus. It carries out the reaction [eIF5A protein]-deoxyhypusine + AH2 + O2 = [eIF5A protein]-hypusine + A + H2O. Its pathway is protein modification; eIF5A hypusination. Functionally, catalyzes the hydroxylation of the N(6)-(4-aminobutyl)-L-lysine intermediate to form hypusine, an essential post-translational modification only found in mature eIF-5A factor. This chain is Deoxyhypusine hydroxylase (lia1), found in Neurospora crassa (strain ATCC 24698 / 74-OR23-1A / CBS 708.71 / DSM 1257 / FGSC 987).